The chain runs to 355 residues: NADH-quinone oxidoreductase subunit H (355 aa).

8 consecutive transmembrane segments (helical) span residues 25 to 45, 91 to 111, 126 to 146, 170 to 190, 205 to 225, 253 to 273, 290 to 310, and 330 to 350; these read IVRILVVAVVILLCVAYLILW, WLYLIAPVMTVVPAFAVWAVI, LLYAMAISSIGVYAVILAGWA, MGFALVLVLMTAGSLNLSEIV, FLSWNWLPLLPAFVVYFVSGI, MAFALFFLAEYINMIVISALA, FIPGVFWLVLKVFALLSVFIW, and VFLPVTVIWVVVVGFWMMSPL.

This sequence belongs to the complex I subunit 1 family. As to quaternary structure, NDH-1 is composed of 14 different subunits. Subunits NuoA, H, J, K, L, M, N constitute the membrane sector of the complex.

Its subcellular location is the cell inner membrane. It carries out the reaction a quinone + NADH + 5 H(+)(in) = a quinol + NAD(+) + 4 H(+)(out). In terms of biological role, NDH-1 shuttles electrons from NADH, via FMN and iron-sulfur (Fe-S) centers, to quinones in the respiratory chain. The immediate electron acceptor for the enzyme in this species is believed to be ubiquinone. Couples the redox reaction to proton translocation (for every two electrons transferred, four hydrogen ions are translocated across the cytoplasmic membrane), and thus conserves the redox energy in a proton gradient. This subunit may bind ubiquinone. This is NADH-quinone oxidoreductase subunit H from Burkholderia ambifaria (strain MC40-6).